We begin with the raw amino-acid sequence, 391 residues long: Phosphoprotein (391 aa).

Residues Thr10 and Thr16 each carry the phosphothreonine modification. Polar residues predominate over residues 54 to 65; that stretch reads QKNIQHPTASHQ. Disordered stretches follow at residues 54 to 97 and 148 to 185; these read QKNI…PEPL and PVTEFKRGGPGAAAQGQTIQEEGIDGNGASAGSKERSG. Ser69 is subject to Phosphoserine. Phosphothreonine occurs at positions 91, 150, and 165. Ser188 is subject to Phosphoserine. The interval 216-279 is multimerization; it reads ISANEIMDLL…MATVKIMDPG (64 aa). Residues 218–245 adopt a coiled-coil conformation; sequence ANEIMDLLRGMDARLQHLEQKVDKVLAQ. Thr250 carries the phosphothreonine modification. Ser257 is modified (phosphoserine). Phosphothreonine occurs at positions 258 and 282. 2 positions are modified to phosphoserine: Ser292 and Ser294. Thr298 is modified (phosphothreonine). A phosphoserine mark is found at Ser301 and Ser374. The tract at residues 343 to 391 is interaction with the nucleoprotein; that stretch reads AGRKVMITKMITDCVANPQMKQAFEQRLAKASTEDALNDIKRDIIRSAI. Residue Thr375 is modified to Phosphothreonine.

Belongs to the rubulavirus/avulavirus P protein family. As to quaternary structure, homotetramer. Interacts (via multimerization domain) with polymerase L; this interaction forms the polymerase L-P complex. Interacts (via N-terminus) with N0 (via Ncore); this interaction allows P to chaperon N0 to avoid N polymerization before encapsidation. Interacts (via C-terminus) with N-RNA template; this interaction positions the polymerase on the template for both transcription and replication. Interacts with host RPS6KB1 kinase; this interaction may play a role in the viral replication and transcription.

In terms of biological role, essential cofactor of the RNA polymerase L that plays a central role in the transcription and replication by forming the polymerase complex with RNA polymerase L and recruiting L to the genomic N-RNA template for RNA synthesis. Also plays a central role in the encapsidation of nascent RNA chains by forming the encapsidation complex with the nucleocapsid protein N (N-P complex). Acts as a chaperone for newly synthesized free N protein, so-called N0, allowing encapsidation of nascent RNA chains during replication. The nucleoprotein protein N prevents excessive phosphorylation of P, which leads to down-regulation of viral transcription/ replication. Participates, together with N, in the formation of viral factories (viroplasms), which are large inclusions in the host cytoplasm where replication takes place. The sequence is that of Phosphoprotein (P/V) from Homo sapiens (Human).